The sequence spans 255 residues: PHD finger protein ALFIN-LIKE 4 (255 aa).

M1 is subject to N-acetylmethionine. The disordered stretch occupies residues 145–200 (GKDKSSVSNNSSNRSKSSSKRGSESRAKFSKPEPKDDEEEEEEGVEEEDEDEQGET). The segment covering 150–160 (SVSNNSSNRSK) has biased composition (low complexity). Over residues 165–178 (RGSESRAKFSKPEP) the composition is skewed to basic and acidic residues. The segment covering 179-198 (KDDEEEEEEGVEEEDEDEQG) has biased composition (acidic residues). The PHD-type zinc-finger motif lies at 199-251 (ETQCGACGESYAADEFWICCDLCEMWFHGKCVKITPARAEHIKQYKCPSCSNK).

It belongs to the Alfin family. In terms of assembly, interacts with H3K4me3 and to a lesser extent with H3K4me2. Ubiquitously expressed.

Its subcellular location is the nucleus. Its function is as follows. Histone-binding component that specifically recognizes H3 tails trimethylated on 'Lys-4' (H3K4me3), which mark transcription start sites of virtually all active genes. The protein is PHD finger protein ALFIN-LIKE 4 (AL4) of Arabidopsis thaliana (Mouse-ear cress).